A 401-amino-acid polypeptide reads, in one-letter code: Tyrosine--tRNA ligase (401 aa).

The 'HIGH' region motif lies at 42–51; sequence PTAPDLHLGH. Positions 226 to 230 match the 'KMSKS' region motif; the sequence is KMSKS. Residue Lys229 coordinates ATP. Residues 336–397 form the S4 RNA-binding domain; that stretch reads IALAQLLKQI…GKRRIAKLSI (62 aa).

It belongs to the class-I aminoacyl-tRNA synthetase family. TyrS type 2 subfamily. As to quaternary structure, homodimer.

The protein localises to the cytoplasm. The catalysed reaction is tRNA(Tyr) + L-tyrosine + ATP = L-tyrosyl-tRNA(Tyr) + AMP + diphosphate + H(+). Functionally, catalyzes the attachment of tyrosine to tRNA(Tyr) in a two-step reaction: tyrosine is first activated by ATP to form Tyr-AMP and then transferred to the acceptor end of tRNA(Tyr). In Legionella pneumophila (strain Paris), this protein is Tyrosine--tRNA ligase.